Consider the following 188-residue polypeptide: Pyridoxal 5'-phosphate synthase subunit PdxT (188 aa).

Residue 47–49 (GES) participates in L-glutamine binding. Residue Cys79 is the Nucleophile of the active site. L-glutamine is bound by residues Arg105 and 134 to 135 (IR). Residues His170 and Glu172 each act as charge relay system in the active site.

The protein belongs to the glutaminase PdxT/SNO family. In terms of assembly, in the presence of PdxS, forms a dodecamer of heterodimers. Only shows activity in the heterodimer.

The enzyme catalyses aldehydo-D-ribose 5-phosphate + D-glyceraldehyde 3-phosphate + L-glutamine = pyridoxal 5'-phosphate + L-glutamate + phosphate + 3 H2O + H(+). It catalyses the reaction L-glutamine + H2O = L-glutamate + NH4(+). Its pathway is cofactor biosynthesis; pyridoxal 5'-phosphate biosynthesis. Its function is as follows. Catalyzes the hydrolysis of glutamine to glutamate and ammonia as part of the biosynthesis of pyridoxal 5'-phosphate. The resulting ammonia molecule is channeled to the active site of PdxS. This is Pyridoxal 5'-phosphate synthase subunit PdxT from Listeria monocytogenes serotype 4a (strain HCC23).